A 1568-amino-acid polypeptide reads, in one-letter code: Pentafunctional AROM polypeptide (1568 aa).

Residues 1–380 (MSQVEKVSIL…YQLKAHEVSK (380 aa)) form a 3-dehydroquinate synthase region. NAD(+) contacts are provided by residues 43-45 (DSN), 81-84 (ENNK), 112-114 (GGV), and Asp-117. Arg-128 serves as a coordination point for 7-phospho-2-dehydro-3-deoxy-D-arabino-heptonate. 137-138 (TT) contacts NAD(+). 2 residues coordinate 7-phospho-2-dehydro-3-deoxy-D-arabino-heptonate: Asp-144 and Lys-150. Lys-159 is a binding site for NAD(+). Asn-160 is a 7-phospho-2-dehydro-3-deoxy-D-arabino-heptonate binding site. Residues 177–180 (FLTT) and Asn-188 each bind NAD(+). Glu-192 lines the Zn(2+) pocket. Residues 192–195 (EVVK) and Lys-244 each bind 7-phospho-2-dehydro-3-deoxy-D-arabino-heptonate. Glu-254 functions as the Proton acceptor; for 3-dehydroquinate synthase activity in the catalytic mechanism. Residues 258–262 (RNLLN) and His-265 each bind 7-phospho-2-dehydro-3-deoxy-D-arabino-heptonate. His-265 is a Zn(2+) binding site. Catalysis depends on His-269, which acts as the Proton acceptor; for 3-dehydroquinate synthase activity. The 7-phospho-2-dehydro-3-deoxy-D-arabino-heptonate site is built by His-281 and Lys-352. Zn(2+) is bound at residue His-281. The segment at 393–842 (VHPFQEETTP…WDVLHTKFGV (450 aa)) is EPSP synthase. Cys-824 functions as the For EPSP synthase activity in the catalytic mechanism. The segment at 867–1056 (DKSIVVIGMR…VPKGRSFVLS (190 aa)) is shikimate kinase. An ATP-binding site is contributed by 874 to 881 (GMRAAGKS). The 3-dehydroquinase stretch occupies residues 1057 to 1267 (LACSDLNDIA…SGNGQLTVGE (211 aa)). Residues 1280–1568 (RRNFYIVGNP…VYEAVVDDNV (289 aa)) form a shikimate dehydrogenase region.

It in the N-terminal section; belongs to the sugar phosphate cyclases superfamily. Dehydroquinate synthase family. In the 2nd section; belongs to the EPSP synthase family. The protein in the 3rd section; belongs to the shikimate kinase family. This sequence in the 4th section; belongs to the type-I 3-dehydroquinase family. It in the C-terminal section; belongs to the shikimate dehydrogenase family. As to quaternary structure, homodimer. Requires Zn(2+) as cofactor.

Its subcellular location is the cytoplasm. It carries out the reaction 7-phospho-2-dehydro-3-deoxy-D-arabino-heptonate = 3-dehydroquinate + phosphate. The catalysed reaction is 3-dehydroquinate = 3-dehydroshikimate + H2O. The enzyme catalyses shikimate + NADP(+) = 3-dehydroshikimate + NADPH + H(+). It catalyses the reaction shikimate + ATP = 3-phosphoshikimate + ADP + H(+). It carries out the reaction 3-phosphoshikimate + phosphoenolpyruvate = 5-O-(1-carboxyvinyl)-3-phosphoshikimate + phosphate. The protein operates within metabolic intermediate biosynthesis; chorismate biosynthesis; chorismate from D-erythrose 4-phosphate and phosphoenolpyruvate: step 2/7. It participates in metabolic intermediate biosynthesis; chorismate biosynthesis; chorismate from D-erythrose 4-phosphate and phosphoenolpyruvate: step 3/7. It functions in the pathway metabolic intermediate biosynthesis; chorismate biosynthesis; chorismate from D-erythrose 4-phosphate and phosphoenolpyruvate: step 4/7. Its pathway is metabolic intermediate biosynthesis; chorismate biosynthesis; chorismate from D-erythrose 4-phosphate and phosphoenolpyruvate: step 5/7. The protein operates within metabolic intermediate biosynthesis; chorismate biosynthesis; chorismate from D-erythrose 4-phosphate and phosphoenolpyruvate: step 6/7. The AROM polypeptide catalyzes 5 consecutive enzymatic reactions in prechorismate polyaromatic amino acid biosynthesis. This is Pentafunctional AROM polypeptide from Clavispora lusitaniae (strain ATCC 42720) (Yeast).